Reading from the N-terminus, the 575-residue chain is Carboxylesterase 5A (575 aa).

Positions 1–20 (MSGNWVHPGQILIWAIWVLA) are cleaved as a signal peptide. The cysteines at positions 94 and 121 are disulfide-linked. Residue S226 is the Acyl-ester intermediate of the active site. The N-linked (GlcNAc...) asparagine glycan is linked to N281. Residue E345 is the Charge relay system of the active site. N-linked (GlcNAc...) asparagine glycosylation is present at N363. H454 acts as the Charge relay system in catalysis. N-linked (GlcNAc...) asparagine glycans are attached at residues N513 and N524.

Belongs to the type-B carboxylesterase/lipase family. Post-translationally, N-glycosylated.

It localises to the secreted. It carries out the reaction a carboxylic ester + H2O = an alcohol + a carboxylate + H(+). Involved in the detoxification of xenobiotics and in the activation of ester and amide prodrugs. The protein is Carboxylesterase 5A (CES5A) of Homo sapiens (Human).